The sequence spans 353 residues: Protein RecA (353 aa).

67–74 (GPESSGKT) provides a ligand contact to ATP.

Belongs to the RecA family.

The protein localises to the cytoplasm. Its function is as follows. Can catalyze the hydrolysis of ATP in the presence of single-stranded DNA, the ATP-dependent uptake of single-stranded DNA by duplex DNA, and the ATP-dependent hybridization of homologous single-stranded DNAs. It interacts with LexA causing its activation and leading to its autocatalytic cleavage. The protein is Protein RecA of Shewanella woodyi (strain ATCC 51908 / MS32).